The chain runs to 1465 residues: DNA polymerase III PolC-type (1465 aa).

Residues 427–583 (YVVFDVETTG…YDAEATGRLL (157 aa)) enclose the Exonuclease domain.

It belongs to the DNA polymerase type-C family. PolC subfamily.

The protein localises to the cytoplasm. The catalysed reaction is DNA(n) + a 2'-deoxyribonucleoside 5'-triphosphate = DNA(n+1) + diphosphate. Functionally, required for replicative DNA synthesis. This DNA polymerase also exhibits 3' to 5' exonuclease activity. The sequence is that of DNA polymerase III PolC-type from Streptococcus pyogenes serotype M5 (strain Manfredo).